The primary structure comprises 382 residues: Acetylornithine deacetylase (382 aa).

Zn(2+) is bound at residue His-79. Asp-81 is an active-site residue. Residue Asp-111 coordinates Zn(2+). Residue Glu-143 is part of the active site. Residues Glu-144, Glu-168, and His-354 each coordinate Zn(2+).

It belongs to the peptidase M20A family. ArgE subfamily. Homodimer. Requires Zn(2+) as cofactor. Co(2+) serves as cofactor. The cofactor is glutathione.

Its subcellular location is the cytoplasm. It catalyses the reaction N(2)-acetyl-L-ornithine + H2O = L-ornithine + acetate. It participates in amino-acid biosynthesis; L-arginine biosynthesis; L-ornithine from N(2)-acetyl-L-ornithine (linear): step 1/1. Functionally, catalyzes the hydrolysis of the amide bond of N(2)-acetylated L-amino acids. Cleaves the acetyl group from N-acetyl-L-ornithine to form L-ornithine, an intermediate in L-arginine biosynthesis pathway, and a branchpoint in the synthesis of polyamines. The protein is Acetylornithine deacetylase of Pasteurella multocida (strain Pm70).